The sequence spans 258 residues: Na(+)-translocating NADH-quinone reductase subunit C (258 aa).

A helical membrane pass occupies residues 14-34; sequence LIVVLAVSLICSVIVAGAVVG. FMN phosphoryl serine is present on serine 226.

This sequence belongs to the NqrC family. In terms of assembly, composed of six subunits; NqrA, NqrB, NqrC, NqrD, NqrE and NqrF. The cofactor is FMN.

The protein localises to the cell inner membrane. The enzyme catalyses a ubiquinone + n Na(+)(in) + NADH + H(+) = a ubiquinol + n Na(+)(out) + NAD(+). NQR complex catalyzes the reduction of ubiquinone-1 to ubiquinol by two successive reactions, coupled with the transport of Na(+) ions from the cytoplasm to the periplasm. NqrA to NqrE are probably involved in the second step, the conversion of ubisemiquinone to ubiquinol. The sequence is that of Na(+)-translocating NADH-quinone reductase subunit C from Neisseria meningitidis serogroup B (strain ATCC BAA-335 / MC58).